Consider the following 514-residue polypeptide: 1-pyrroline-5-carboxylate dehydrogenase (514 aa).

Active-site residues include glutamate 286 and cysteine 320.

This sequence belongs to the aldehyde dehydrogenase family. RocA subfamily.

The enzyme catalyses L-glutamate 5-semialdehyde + NAD(+) + H2O = L-glutamate + NADH + 2 H(+). Its pathway is amino-acid degradation; L-proline degradation into L-glutamate; L-glutamate from L-proline: step 2/2. In Staphylococcus saprophyticus subsp. saprophyticus (strain ATCC 15305 / DSM 20229 / NCIMB 8711 / NCTC 7292 / S-41), this protein is 1-pyrroline-5-carboxylate dehydrogenase.